The primary structure comprises 1178 residues: DNA-directed RNA polymerase subunit beta (1178 aa).

Positions 1–37 are disordered; sequence MLEGCILPDFGQSKTDVSPSQSRPQSSPNNSVPGAPN. The span at 17–33 shows a compositional bias: low complexity; it reads VSPSQSRPQSSPNNSVP.

This sequence belongs to the RNA polymerase beta chain family. In terms of assembly, the RNAP catalytic core consists of 2 alpha, 1 beta, 1 beta' and 1 omega subunit. When a sigma factor is associated with the core the holoenzyme is formed, which can initiate transcription.

The catalysed reaction is RNA(n) + a ribonucleoside 5'-triphosphate = RNA(n+1) + diphosphate. In terms of biological role, DNA-dependent RNA polymerase catalyzes the transcription of DNA into RNA using the four ribonucleoside triphosphates as substrates. The protein is DNA-directed RNA polymerase subunit beta of Mycobacterium leprae (strain Br4923).